The primary structure comprises 493 residues: Glutamyl-tRNA(Gln) amidotransferase subunit A (493 aa).

Residues Lys79 and Ser159 each act as charge relay system in the active site. Ser183 serves as the catalytic Acyl-ester intermediate.

Belongs to the amidase family. GatA subfamily. In terms of assembly, heterotrimer of A, B and C subunits.

The catalysed reaction is L-glutamyl-tRNA(Gln) + L-glutamine + ATP + H2O = L-glutaminyl-tRNA(Gln) + L-glutamate + ADP + phosphate + H(+). In terms of biological role, allows the formation of correctly charged Gln-tRNA(Gln) through the transamidation of misacylated Glu-tRNA(Gln) in organisms which lack glutaminyl-tRNA synthetase. The reaction takes place in the presence of glutamine and ATP through an activated gamma-phospho-Glu-tRNA(Gln). The chain is Glutamyl-tRNA(Gln) amidotransferase subunit A from Agrobacterium fabrum (strain C58 / ATCC 33970) (Agrobacterium tumefaciens (strain C58)).